Reading from the N-terminus, the 120-residue chain is UPF0231 protein YE0706 (120 aa).

The protein belongs to the UPF0231 family.

This chain is UPF0231 protein YE0706, found in Yersinia enterocolitica serotype O:8 / biotype 1B (strain NCTC 13174 / 8081).